A 304-amino-acid polypeptide reads, in one-letter code: Non-specific ribonucleoside hydrolase RihC (304 aa).

H233 is a catalytic residue.

Belongs to the IUNH family. RihC subfamily.

In terms of biological role, hydrolyzes both purine and pyrimidine ribonucleosides with a broad-substrate specificity. The polypeptide is Non-specific ribonucleoside hydrolase RihC (Escherichia coli (strain SMS-3-5 / SECEC)).